The chain runs to 335 residues: Methionine import ATP-binding protein MetN (335 aa).

Residues 2-241 (IQFKDSYKHY…PQHPTTRSFV (240 aa)) form the ABC transporter domain. 38–45 (GHSGAGKS) serves as a coordination point for ATP.

Belongs to the ABC transporter superfamily. Methionine importer (TC 3.A.1.24) family. As to quaternary structure, the complex is composed of two ATP-binding proteins (MetN), two transmembrane proteins (MetI) and a solute-binding protein (MetQ).

Its subcellular location is the cell inner membrane. The enzyme catalyses L-methionine(out) + ATP + H2O = L-methionine(in) + ADP + phosphate + H(+). It carries out the reaction D-methionine(out) + ATP + H2O = D-methionine(in) + ADP + phosphate + H(+). Functionally, part of the ABC transporter complex MetNIQ involved in methionine import. Responsible for energy coupling to the transport system. This is Methionine import ATP-binding protein MetN from Xylella fastidiosa (strain Temecula1 / ATCC 700964).